Consider the following 72-residue polypeptide: Crustacean hyperglycemic hormone (72 aa).

Glutamine 1 carries the post-translational modification Pyrrolidone carboxylic acid. At phenylalanine 3 the chain carries D-phenylalanine. Cystine bridges form between cysteine 7–cysteine 43, cysteine 23–cysteine 39, and cysteine 26–cysteine 52. At valine 72 the chain carries Valine amide.

As to expression, produced by the medulla terminalis X-organ in the eyestalks and transported to the sinus gland where they are stored and released.

It localises to the secreted. Hormone found in the sinus gland of isopods and decapods which controls the blood sugar level. Has a secretagogue action over the amylase released from the midgut gland. May act as a stress hormone and may be involved in the control of molting and reproduction. The chain is Crustacean hyperglycemic hormone from Astacus astacus (Noble crayfish).